We begin with the raw amino-acid sequence, 251 residues long: Intermembrane phospholipid transport system lipoprotein MlaA (251 aa).

Positions 1–17 (MKLRLSALALGTTLLVG) are cleaved as a signal peptide. Cysteine 18 is lipidated: N-palmitoyl cysteine. The S-diacylglycerol cysteine moiety is linked to residue cysteine 18. Residues 228 to 251 (GELKPQENPNAQAIQDDLKDIDSE) form a disordered region.

It belongs to the MlaA family.

The protein resides in the cell outer membrane. Functionally, involved in a phospholipid transport pathway that maintains lipid asymmetry in the outer membrane by retrograde trafficking of phospholipids from the outer membrane to the inner membrane. Required for intercellular spreading of S.flexneri. The polypeptide is Intermembrane phospholipid transport system lipoprotein MlaA (Shigella flexneri).